Here is a 369-residue protein sequence, read N- to C-terminus: Transforming protein Maf (369 aa).

2 disordered regions span residues 57-85 and 169-243; these read STPM…TDQK and GGAP…GLHF. Positions 173–183 are enriched in basic residues; the sequence is HYHHHHHHPHH. Over residues 184 to 193 the composition is skewed to gly residues; that stretch reads GGGGGGGGHP. Positions 194–211 are enriched in low complexity; the sequence is HGAAPGSAPPSSASSSAA. Residues 212–226 are compositionally biased toward gly residues; that stretch reads GSGGGGGGGGGGAGG. A basic motif region spans residues 274 to 299; sequence RLKQKRRTLKNRGYAQSCRFKRVQQR. Positions 274-337 constitute a bZIP domain; the sequence is RLKQKRRTLK…DAYKEKYEKL (64 aa). The interval 302–323 is leucine-zipper; the sequence is LESEKNQLLQQVEHLKQEISRL. Residues 341–369 are disordered; that stretch reads GFRENGSSSDNPSSPEFFMYPRESSTTVM. Residues 345-354 show a composition bias toward polar residues; the sequence is NGSSSDNPSS.

This sequence belongs to the bZIP family. Maf subfamily.

It localises to the host nucleus. In terms of biological role, might be a transcriptional trans-activator. The sequence is that of Transforming protein Maf (V-MAF) from Galliformes.